The sequence spans 426 residues: Serine/threonine-protein kinase ssn3 (426 aa).

The Protein kinase domain maps to 41 to 368; sequence YHIVGFISSG…AREALEHPYF (328 aa). ATP-binding positions include 47-55 and Lys71; that span reads ISSGTYGRV. The active-site Proton acceptor is the Asp173. The interval 390–426 is disordered; sequence RVTQDDNDIRSGSLPGTKRSGLPDDSLMGRAAKRLKE.

It belongs to the protein kinase superfamily. CMGC Ser/Thr protein kinase family. CDC2/CDKX subfamily. In terms of assembly, component of the srb8-11 complex, a regulatory module of the Mediator complex. Requires Mg(2+) as cofactor.

It is found in the nucleus. The enzyme catalyses L-seryl-[protein] + ATP = O-phospho-L-seryl-[protein] + ADP + H(+). It catalyses the reaction L-threonyl-[protein] + ATP = O-phospho-L-threonyl-[protein] + ADP + H(+). It carries out the reaction [DNA-directed RNA polymerase] + ATP = phospho-[DNA-directed RNA polymerase] + ADP + H(+). Functionally, component of the srb8-11 complex. The srb8-11 complex is a regulatory module of the Mediator complex which is itself dependent transcription. The srb8-11 complex may be involved in the transcriptional repression of a subset of genes regulated by Mediator. It may inhibit the association of the Mediator complex with RNA polymerase II to form the holoenzyme complex. The srb8-11 complex phosphorylates the C-terminal domain (CTD) of the largest subunit of RNA polymerase II. This Neosartorya fischeri (strain ATCC 1020 / DSM 3700 / CBS 544.65 / FGSC A1164 / JCM 1740 / NRRL 181 / WB 181) (Aspergillus fischerianus) protein is Serine/threonine-protein kinase ssn3 (ssn3).